A 102-amino-acid polypeptide reads, in one-letter code: MGTRRSNAEHAYVVAYDIADPKRWRQVFKTMKGYGQWVQLSVFQCRLDGGRRIAMASILESLIDRETDHVLMLDLGPAEDVDLAVESLGKAFETLERQAMII.

Aspartate 17 provides a ligand contact to Mg(2+).

Belongs to the CRISPR-associated endoribonuclease Cas2 protein family. Homodimer, forms a heterotetramer with a Cas1 homodimer. Requires Mg(2+) as cofactor.

Its function is as follows. CRISPR (clustered regularly interspaced short palindromic repeat), is an adaptive immune system that provides protection against mobile genetic elements (viruses, transposable elements and conjugative plasmids). CRISPR clusters contain sequences complementary to antecedent mobile elements and target invading nucleic acids. CRISPR clusters are transcribed and processed into CRISPR RNA (crRNA). Functions as a ssRNA-specific endoribonuclease. Involved in the integration of spacer DNA into the CRISPR cassette. This chain is CRISPR-associated endoribonuclease Cas2 1, found in Rhodospirillum rubrum (strain ATCC 11170 / ATH 1.1.1 / DSM 467 / LMG 4362 / NCIMB 8255 / S1).